Consider the following 217-residue polypeptide: Large ribosomal subunit protein uL3 (217 aa).

Residues 134-146 (GRATHGNSRSHNV) are compositionally biased toward polar residues. The disordered stretch occupies residues 134–154 (GRATHGNSRSHNVPGSIGMAQ). An N5-methylglutamine modification is found at Gln-154.

It belongs to the universal ribosomal protein uL3 family. As to quaternary structure, part of the 50S ribosomal subunit. Forms a cluster with proteins L14 and L19. Methylated by PrmB.

In terms of biological role, one of the primary rRNA binding proteins, it binds directly near the 3'-end of the 23S rRNA, where it nucleates assembly of the 50S subunit. This is Large ribosomal subunit protein uL3 from Burkholderia cenocepacia (strain HI2424).